Consider the following 380-residue polypeptide: Cytochrome b (380 aa).

The next 4 membrane-spanning stretches (helical) occupy residues 33-53, 77-98, 113-133, and 178-198; these read FGSL…FLAM, WLLR…YLHI, WNIG…GYVL, and FFTF…LHLL. His-83 and His-97 together coordinate heme b. Positions 182 and 196 each coordinate heme b. Residue His-201 participates in a ubiquinone binding. 4 helical membrane passes run 226–246, 288–308, 320–340, and 347–367; these read YKDL…ALLN, LGGV…PVLH, PSQT…WIGG, and FIII…ILIP.

This sequence belongs to the cytochrome b family. The cytochrome bc1 complex contains 3 respiratory subunits (MT-CYB, CYC1 and UQCRFS1), 2 core proteins (UQCRC1 and UQCRC2) and probably 6 low-molecular weight proteins. The cofactor is heme b.

It localises to the mitochondrion inner membrane. Functionally, component of the ubiquinol-cytochrome c reductase complex (complex III or cytochrome b-c1 complex) that is part of the mitochondrial respiratory chain. The b-c1 complex mediates electron transfer from ubiquinol to cytochrome c. Contributes to the generation of a proton gradient across the mitochondrial membrane that is then used for ATP synthesis. This chain is Cytochrome b (mt-cyb), found in Atractosteus spatula (Alligator gar).